Consider the following 288-residue polypeptide: tRNA dimethylallyltransferase (288 aa).

Position 17–24 (17–24 (GPTASGKS)) interacts with ATP. Substrate is bound at residue 19–24 (TASGKS).

Belongs to the IPP transferase family. In terms of assembly, monomer. Mg(2+) is required as a cofactor.

The catalysed reaction is adenosine(37) in tRNA + dimethylallyl diphosphate = N(6)-dimethylallyladenosine(37) in tRNA + diphosphate. Functionally, catalyzes the transfer of a dimethylallyl group onto the adenine at position 37 in tRNAs that read codons beginning with uridine, leading to the formation of N6-(dimethylallyl)adenosine (i(6)A). The sequence is that of tRNA dimethylallyltransferase from Ruegeria sp. (strain TM1040) (Silicibacter sp.).